The sequence spans 169 residues: MSRIALYPGSFDPVTNGHLDVVRHAVALCDKLVVAIGIHPGKKPLFTTEERLAMVERVFGPVAKAAGCDFGCTTYDNLTVTAAEKVGATIMIRGLRDGTDLDYEMQIAGMNETMAPAIHTVFLPASVGVRPITATLVRQIAAMGGDVSAFVPAEVASALKSKFAAGSPA.

Residue Ser10 coordinates substrate. ATP contacts are provided by residues 10-11 (SF) and His18. The substrate site is built by Lys42, Thr79, and Arg93. Residues 94–96 (GLR), Glu104, and 129–135 (VRPITAT) contribute to the ATP site.

This sequence belongs to the bacterial CoaD family. Homohexamer. Requires Mg(2+) as cofactor.

It localises to the cytoplasm. It carries out the reaction (R)-4'-phosphopantetheine + ATP + H(+) = 3'-dephospho-CoA + diphosphate. It participates in cofactor biosynthesis; coenzyme A biosynthesis; CoA from (R)-pantothenate: step 4/5. In terms of biological role, reversibly transfers an adenylyl group from ATP to 4'-phosphopantetheine, yielding dephospho-CoA (dPCoA) and pyrophosphate. The protein is Phosphopantetheine adenylyltransferase of Rhodopseudomonas palustris (strain TIE-1).